A 341-amino-acid polypeptide reads, in one-letter code: Twinfilin-2 (341 aa).

ADF-H domains are found at residues 1–131 (ATEE…KHLS) and 169–305 (GLAF…DEVH). N6-acetyllysine is present on lysine 6. At tyrosine 301 the chain carries Phosphotyrosine. The disordered stretch occupies residues 314–341 (AFAKPKGPGGKRGHKRLIRGPGENGDDS). Over residues 322–331 (GGKRGHKRLI) the composition is skewed to basic residues. Serine 341 carries the phosphoserine modification.

This sequence belongs to the actin-binding proteins ADF family. Twinfilin subfamily. As to quaternary structure, interacts with G-actin; ADP-actin form and capping protein (CP). May also be able to interact with TWF1 and phosphoinositides, PI(4,5)P2. When bound to PI(4,5)P2, it is down-regulated. Interacts with MYO7A. In terms of processing, phosphorylated on both serine and threonine residues.

The protein localises to the cytoplasm. Its subcellular location is the cytoskeleton. The protein resides in the perinuclear region. It is found in the cell projection. It localises to the stereocilium. Its function is as follows. Actin-binding protein involved in motile and morphological processes. Inhibits actin polymerization, likely by sequestering G-actin. By capping the barbed ends of filaments, it also regulates motility. Seems to play an important role in clathrin-mediated endocytosis and distribution of endocytic organelles. May play a role in regulating the mature length of the middle and short rows of stereocilia. This chain is Twinfilin-2 (TWF2), found in Pongo abelii (Sumatran orangutan).